A 171-amino-acid polypeptide reads, in one-letter code: Profilin (171 aa).

Residues 5–10 (YSWDSY) are pro-rich sequence-binding. The Plasmodium-specific profilin mini-domain motif lies at 48–54 (FDKWSLF). Actin-binding stretches follow at residues 100–112 (KYQFINIERDLEF) and 152–156 (RGNSK).

This sequence belongs to the profilin family. As to quaternary structure, binds actin.

The protein localises to the cytoplasm. It is found in the cytoskeleton. Functionally, essential for the invasive blood stages of the parasite. Binds to proline rich sequences in various regulatory formin-like proteins and also to membrane phospholipids. Binds to actin and affects the structure of the cytoskeleton. Weakly sequesters actin monomers. This Plasmodium falciparum (isolate 3D7) protein is Profilin.